The sequence spans 896 residues: Protein translocase subunit SecA (896 aa).

ATP is bound by residues glutamine 87, 105 to 109, and aspartate 512; that span reads GEGKT. Positions 858 to 886 are disordered; the sequence is RAGGEAEAAKPVVRDEKKVGRNDPCPCGS. Residues 869 to 878 show a composition bias toward basic and acidic residues; sequence VVRDEKKVGR. Zn(2+)-binding residues include cysteine 882, cysteine 884, cysteine 893, and cysteine 894.

This sequence belongs to the SecA family. In terms of assembly, monomer and homodimer. Part of the essential Sec protein translocation apparatus which comprises SecA, SecYEG and auxiliary proteins SecDF-YajC and YidC. The cofactor is Zn(2+).

The protein localises to the cell inner membrane. It localises to the cytoplasm. It carries out the reaction ATP + H2O + cellular proteinSide 1 = ADP + phosphate + cellular proteinSide 2.. Its function is as follows. Part of the Sec protein translocase complex. Interacts with the SecYEG preprotein conducting channel. Has a central role in coupling the hydrolysis of ATP to the transfer of proteins into and across the cell membrane, serving as an ATP-driven molecular motor driving the stepwise translocation of polypeptide chains across the membrane. The sequence is that of Protein translocase subunit SecA from Syntrophotalea carbinolica (strain DSM 2380 / NBRC 103641 / GraBd1) (Pelobacter carbinolicus).